We begin with the raw amino-acid sequence, 171 residues long: S-ribosylhomocysteine lyase (171 aa).

The Fe cation site is built by histidine 54, histidine 58, and cysteine 128.

It belongs to the LuxS family. Homodimer. Requires Fe cation as cofactor.

The enzyme catalyses S-(5-deoxy-D-ribos-5-yl)-L-homocysteine = (S)-4,5-dihydroxypentane-2,3-dione + L-homocysteine. Involved in the synthesis of autoinducer 2 (AI-2) which is secreted by bacteria and is used to communicate both the cell density and the metabolic potential of the environment. The regulation of gene expression in response to changes in cell density is called quorum sensing. Catalyzes the transformation of S-ribosylhomocysteine (RHC) to homocysteine (HC) and 4,5-dihydroxy-2,3-pentadione (DPD). The polypeptide is S-ribosylhomocysteine lyase (Edwardsiella ictaluri (strain 93-146)).